A 125-amino-acid polypeptide reads, in one-letter code: MNHILLVGAGGALGSVLRYLVGLWMLQRAGPAFPWGTLFVNVTGSFLIGFLAEFIMHKMGASPEMRVFLITGVLGGYTTFSAFSLDAIALLEHGQTMSGLAYIVASVGLSMLAVFAGLALMRAMV.

The next 4 membrane-spanning stretches (helical) occupy residues 4 to 24 (ILLV…VGLW), 32 to 52 (AFPW…GFLA), 68 to 88 (FLIT…LDAI), and 100 to 120 (LAYI…GLAL). The Na(+) site is built by Gly-75 and Thr-78.

The protein belongs to the fluoride channel Fluc/FEX (TC 1.A.43) family.

It localises to the cell inner membrane. It catalyses the reaction fluoride(in) = fluoride(out). With respect to regulation, na(+) is not transported, but it plays an essential structural role and its presence is essential for fluoride channel function. Its function is as follows. Fluoride-specific ion channel. Important for reducing fluoride concentration in the cell, thus reducing its toxicity. In Rhizobium meliloti (strain 1021) (Ensifer meliloti), this protein is Fluoride-specific ion channel FluC.